The primary structure comprises 160 residues: Troponin C, isoform 2 (160 aa).

EF-hand domains are found at residues 15–50 (DQIEQFRKYFNMFDKEGKGYIRATQVGQILRTMGQA), 51–86 (FEERDLKQLIKEFDADGSGEIEFEEFAAMVANFVVN), 92–127 (GLEEELREAFRLYDKEGNGYINVSDLRDILRALDDN), and 128–160 (VSEEELDEMIAEIDADGSGTVDFDEFMEMMSGE). Ca(2+)-binding residues include Asp-64, Asp-66, Ser-68, Glu-70, and Glu-75. Residues Asp-141, Asp-143, Ser-145, Thr-147, and Glu-152 each coordinate Ca(2+).

The protein belongs to the troponin C family. Pharyngeal muscle.

The polypeptide is Troponin C, isoform 2 (tnc-2) (Caenorhabditis elegans).